The chain runs to 418 residues: Type II methyltransferase M.MspI (418 aa).

An SAM-dependent MTase C5-type domain is found at 105 to 404 (FKFIDLFSGI…EQISLALKTV (300 aa)). Residue cysteine 174 is part of the active site.

It belongs to the class I-like SAM-binding methyltransferase superfamily. C5-methyltransferase family.

The enzyme catalyses a 2'-deoxycytidine in DNA + S-adenosyl-L-methionine = a 5-methyl-2'-deoxycytidine in DNA + S-adenosyl-L-homocysteine + H(+). A methylase, recognizes the double-stranded sequence 5'-CCGG-3', methylates C-1 on both strands, and protects the DNA from cleavage by the MspI endonuclease. This chain is Type II methyltransferase M.MspI (mspIM), found in Moraxella sp.